Consider the following 544-residue polypeptide: Chaperonin GroEL 4 (544 aa).

ATP is bound by residues 30 to 33 (TLGP), Lys51, 87 to 91 (DGTTT), Gly415, and Asp496.

It belongs to the chaperonin (HSP60) family. In terms of assembly, forms a cylinder of 14 subunits composed of two heptameric rings stacked back-to-back. Interacts with the co-chaperonin GroES.

It is found in the cytoplasm. The enzyme catalyses ATP + H2O + a folded polypeptide = ADP + phosphate + an unfolded polypeptide.. Its function is as follows. Together with its co-chaperonin GroES, plays an essential role in assisting protein folding. The GroEL-GroES system forms a nano-cage that allows encapsulation of the non-native substrate proteins and provides a physical environment optimized to promote and accelerate protein folding. This is Chaperonin GroEL 4 from Sinorhizobium medicae (strain WSM419) (Ensifer medicae).